Here is a 179-residue protein sequence, read N- to C-terminus: Translation initiation factor IF-3 (179 aa).

It belongs to the IF-3 family. As to quaternary structure, monomer.

The protein resides in the cytoplasm. Functionally, IF-3 binds to the 30S ribosomal subunit and shifts the equilibrium between 70S ribosomes and their 50S and 30S subunits in favor of the free subunits, thus enhancing the availability of 30S subunits on which protein synthesis initiation begins. This is Translation initiation factor IF-3 from Buchnera aphidicola subsp. Acyrthosiphon pisum (strain APS) (Acyrthosiphon pisum symbiotic bacterium).